Reading from the N-terminus, the 111-residue chain is ASFQZAPPGBAKAGEKIFKTKCAQCHTVDKGAGHKQGPNLNGLFGRQSGTTAGYSYSAANKNMAVQWGENTLYDYLLNPKKYIPGTKMVFPGLKKPQDRADLIAYLKZSTA.

N-acetylalanine is present on Ala-1. Heme c is bound by residues Cys-22, Cys-25, and His-26. At Lys-80 the chain carries N6,N6,N6-trimethyllysine. A heme c-binding site is contributed by Met-88. N6,N6,N6-trimethyllysine is present on Lys-94.

It belongs to the cytochrome c family. Binds 1 heme c group covalently per subunit.

It localises to the mitochondrion intermembrane space. Electron carrier protein. The oxidized form of the cytochrome c heme group can accept an electron from the heme group of the cytochrome c1 subunit of cytochrome reductase. Cytochrome c then transfers this electron to the cytochrome oxidase complex, the final protein carrier in the mitochondrial electron-transport chain. The protein is Cytochrome c of Gossypium barbadense (Sea Island cotton).